Reading from the N-terminus, the 270-residue chain is 4-hydroxy-tetrahydrodipicolinate reductase (270 aa).

NAD(+) is bound by residues 11-16 and E37; that span reads GAGGRM. R38 lines the NADP(+) pocket. Residues 101–103 and 125–128 contribute to the NAD(+) site; these read GTT and APNM. The active-site Proton donor/acceptor is the H158. H159 contributes to the (S)-2,3,4,5-tetrahydrodipicolinate binding site. The Proton donor role is filled by K162. (S)-2,3,4,5-tetrahydrodipicolinate is bound at residue 168–169; that stretch reads GT.

It belongs to the DapB family.

Its subcellular location is the cytoplasm. The enzyme catalyses (S)-2,3,4,5-tetrahydrodipicolinate + NAD(+) + H2O = (2S,4S)-4-hydroxy-2,3,4,5-tetrahydrodipicolinate + NADH + H(+). It catalyses the reaction (S)-2,3,4,5-tetrahydrodipicolinate + NADP(+) + H2O = (2S,4S)-4-hydroxy-2,3,4,5-tetrahydrodipicolinate + NADPH + H(+). Its pathway is amino-acid biosynthesis; L-lysine biosynthesis via DAP pathway; (S)-tetrahydrodipicolinate from L-aspartate: step 4/4. In terms of biological role, catalyzes the conversion of 4-hydroxy-tetrahydrodipicolinate (HTPA) to tetrahydrodipicolinate. This is 4-hydroxy-tetrahydrodipicolinate reductase from Shewanella baltica (strain OS223).